A 1025-amino-acid chain; its full sequence is Synapsin (1025 aa).

Disordered regions lie at residues 1-94 (MKRG…SRES), 439-784 (VCRP…NYGS), 872-910 (YDSNSIASQGEGLNNPSDLPSYTRPSYSRSESNASKHSD), and 995-1025 (DFSDSGSMSSIGSHTKRWSASKEEDDELDLK). Residues 34-52 (TKPPVAGGPPNMPPPPAPG) show a composition bias toward pro residues. A compositionally biased stretch (low complexity) spans 454–463 (SRSSVSSRAE). Residues 472–492 (PTPPLPAGPRPAPMGGPPPIP) show a composition bias toward pro residues. 2 stretches are compositionally biased toward low complexity: residues 499–546 (VGSI…SSVS) and 594–626 (SETSSGSGPGSVPSSAGPGSGFSSSFLGKQFSF). At serine 539 the chain carries Phosphoserine. Polar residues predominate over residues 651–673 (TTASSAVRPESSVSVSDSRNTDT). The span at 690 to 702 (QQERVNPFDKEPS) shows a compositional bias: basic and acidic residues. Low complexity predominate over residues 703 to 725 (KSGSAASIHTSSSSSISSSSISS). A compositionally biased stretch (polar residues) spans 726 to 735 (RINRNGNAIQ). The segment covering 736 to 749 (SPPPPAGPPPPPPT) has biased composition (pro residues). Over residues 750–759 (NVTAVGSNAN) the composition is skewed to polar residues. Residues 760–772 (SSSGYRNSFSSSL) are compositionally biased toward low complexity. Positions 872-904 (YDSNSIASQGEGLNNPSDLPSYTRPSYSRSESN) are enriched in polar residues. Over residues 995–1007 (DFSDSGSMSSIGS) the composition is skewed to low complexity.

The protein belongs to the synapsin family. As to quaternary structure, identified in a complex with Syt1 and nwk. Widely expressed in the embryonic and adult nervous system synaptic terminals.

Its subcellular location is the synapse. In terms of biological role, plays a significant role in nervous system function, which is subtle at the cellular level but manifests itself in complex behavior. The sequence is that of Synapsin (Syn) from Drosophila melanogaster (Fruit fly).